We begin with the raw amino-acid sequence, 69 residues long: Putative transmembrane protein ORF34 (69 aa).

A run of 2 helical transmembrane segments spans residues 7 to 27 and 42 to 62; these read LLSV…MMQF and VSLM…IVYF.

It is found in the host membrane. This Haloarcula hispanica (His1V) protein is Putative transmembrane protein ORF34.